The primary structure comprises 534 residues: MLGTLGSGFSNFPWLSASILFPIGSAFVIPFFPDKGDGKEVRWFALSIALTTFLITVGSYINGFDINNENVQLKENVSWLPDLGLTWSVGADGISMPLILLTSFITALAVLAAWPVKFKPKLFFFLILVMDGGQIAVFAVQDMLLFFLTWELELIPVYLLLAIWGGKNRQYAATKFIIYTAGSSIFILLAALAMGFYGTEIPNFEFSHLAAQDFTQKFQILCYVGLLIAFGVKLPIVPLHTWLPDAHGEATAPVHMLLAGILLKMGGYALLRFNAQLLPAAHAQFAPLLIVLGVVNIIYAALTSFAQRNLKRKIAYSSISHMGFVLIGIGSFSSLGTSGAMLQMVSHGLIGASLFFLVGATYDRTKTLKLDEMSGVGQKMRIMFALWTACSLASLALPGMSGFVSELMVFTGFVTDEVYTLPFRVIMASLAAIGVILTPIYLLSMLREIFFGKENPKLTEERKLIDAEPREVYIIACLLLPIIGIGLYPRLVTESYLASINNLVDRDLTAVKSAVKTNIFSGTKKNEILKAPTI.

Helical transmembrane passes span Phe12–Phe32, Phe44–Phe64, Ile94–Trp114, Pro120–Val140, Leu144–Trp164, Phe176–Phe196, Ile220–His240, Thr251–Leu271, Phe285–Phe305, Ile314–Ser334, Ala340–Ala360, Phe384–Val404, Val425–Met445, and Val472–Val492.

The protein belongs to the complex I subunit 4 family.

The protein localises to the cellular thylakoid membrane. It carries out the reaction a plastoquinone + NADH + (n+1) H(+)(in) = a plastoquinol + NAD(+) + n H(+)(out). It catalyses the reaction a plastoquinone + NADPH + (n+1) H(+)(in) = a plastoquinol + NADP(+) + n H(+)(out). Its function is as follows. NDH-1 shuttles electrons from NAD(P)H, via FMN and iron-sulfur (Fe-S) centers, to quinones in the respiratory chain. The immediate electron acceptor for the enzyme in this species is believed to be plastoquinone. Couples the redox reaction to proton translocation (for every two electrons transferred, four hydrogen ions are translocated across the cytoplasmic membrane), and thus conserves the redox energy in a proton gradient. The chain is NAD(P)H-quinone oxidoreductase chain 4 from Prochlorococcus marinus (strain MIT 9312).